A 377-amino-acid polypeptide reads, in one-letter code: Prostaglandin E synthase 2 (377 aa).

The Lumenal segment spans residues 1-65 (MAAACTRTLG…LAAPVRGSGR (65 aa)). Residues 66–83 (VLGCAFLLGGGFGLYQTI) traverse the membrane as a helical segment. The region spanning 105–182 (LKLTLYQYKT…ALKTYISSKD (78 aa)) is the GST N-terminal domain. Residues Val-153 and 166–167 (DS) each bind glutathione. In terms of domain architecture, GST C-terminal spans 266–377 (YIVREGKFGS…RMQKATQHVS (112 aa)).

The protein belongs to the GST superfamily. In terms of assembly, homodimer.

The protein resides in the golgi apparatus membrane. It catalyses the reaction prostaglandin H2 = prostaglandin E2. The catalysed reaction is prostaglandin H2 = (12S)-hydroxy-(5Z,8E,10E)-heptadecatrienoate + malonaldehyde. It functions in the pathway lipid metabolism; prostaglandin biosynthesis. Its activity is regulated as follows. Isomerase activity is increased by sulfhydril compounds. Dithiothreitol (DTT) is most effective, followed by glutathione (GSH) and 2-mercaptoethanol. Functionally, isomerase that catalyzes the conversion of PGH2 into the more stable prostaglandin E2 (PGE2) (in vitro). The biological function and the GSH-dependent property of PTGES2 is still under debate. In vivo, PTGES2 could form a complex with GSH and heme and would not participate in PGE2 synthesis but would catalyze the degradation of prostaglandin E2 H2 (PGH2) to 12(S)-hydroxy-5(Z),8(E),10(E)-heptadecatrienoic acid (HHT) and malondialdehyde (MDA). The chain is Prostaglandin E synthase 2 (ptges2) from Danio rerio (Zebrafish).